Consider the following 247-residue polypeptide: ATP synthase delta chain, chloroplastic (247 aa).

A chloroplast-targeting transit peptide spans 1-60; it reads MAALRLASFTLRPAAAAAASASSGATPAAPRSASFARAARGLPSLRLAPPRRRGDLVRPR.

This sequence belongs to the ATPase delta chain family. As to quaternary structure, F-type ATPases have 2 components, CF(1) - the catalytic core - and CF(0) - the membrane proton channel. CF(1) has five subunits: alpha(3), beta(3), gamma(1), delta(1), epsilon(1). CF(0) has three main subunits: a, b and c.

The protein localises to the plastid. It localises to the chloroplast thylakoid membrane. Functionally, this protein seems to be part of the stalk that links CF(0) to CF(1). It either transmits conformational changes from CF(0) into CF(1) or is implicated in proton conduction. The protein is ATP synthase delta chain, chloroplastic (ATPD) of Sorghum bicolor (Sorghum).